A 284-amino-acid polypeptide reads, in one-letter code: Shikimate dehydrogenase (NADP(+)) (284 aa).

Residues 20-22 and Ser67 each bind shikimate; that span reads SIS. Lys71 (proton acceptor) is an active-site residue. Asp83 is an NADP(+) binding site. 2 residues coordinate shikimate: Asn92 and Asp107. Residues 129 to 133 and Ile227 contribute to the NADP(+) site; that span reads GAGGA. Tyr229 lines the shikimate pocket. Gly250 contacts NADP(+).

This sequence belongs to the shikimate dehydrogenase family. In terms of assembly, homodimer.

It carries out the reaction shikimate + NADP(+) = 3-dehydroshikimate + NADPH + H(+). The protein operates within metabolic intermediate biosynthesis; chorismate biosynthesis; chorismate from D-erythrose 4-phosphate and phosphoenolpyruvate: step 4/7. In terms of biological role, involved in the biosynthesis of the chorismate, which leads to the biosynthesis of aromatic amino acids. Catalyzes the reversible NADPH linked reduction of 3-dehydroshikimate (DHSA) to yield shikimate (SA). In Streptococcus pneumoniae (strain ATCC 700669 / Spain 23F-1), this protein is Shikimate dehydrogenase (NADP(+)).